The primary structure comprises 437 residues: Bifunctional protein GlmU (437 aa).

The segment at 1 to 223 is pyrophosphorylase; the sequence is MHNTAVILAA…WDECRGVNSR (223 aa). UDP-N-acetyl-alpha-D-glucosamine contacts are provided by residues 8-11, lysine 22, glutamine 70, 75-76, 96-98, glycine 135, glutamate 149, asparagine 164, and asparagine 221; these read LAAG, GT, and YGD. Aspartate 98 lines the Mg(2+) pocket. Asparagine 221 lines the Mg(2+) pocket. The tract at residues 224–244 is linker; it reads AELAAAEAAMQSRLRAAALAA. An N-acetyltransferase region spans residues 245–437; it reads GVTMTAPETV…AELRMTKGKR (193 aa). Residues arginine 310 and lysine 328 each contribute to the UDP-N-acetyl-alpha-D-glucosamine site. The active-site Proton acceptor is the histidine 340. UDP-N-acetyl-alpha-D-glucosamine-binding residues include tyrosine 343 and asparagine 354. Acetyl-CoA-binding positions include alanine 357, 363–364, serine 382, alanine 400, and arginine 417; that span reads NY.

This sequence in the N-terminal section; belongs to the N-acetylglucosamine-1-phosphate uridyltransferase family. It in the C-terminal section; belongs to the transferase hexapeptide repeat family. Homotrimer. It depends on Mg(2+) as a cofactor.

Its subcellular location is the cytoplasm. The catalysed reaction is alpha-D-glucosamine 1-phosphate + acetyl-CoA = N-acetyl-alpha-D-glucosamine 1-phosphate + CoA + H(+). It catalyses the reaction N-acetyl-alpha-D-glucosamine 1-phosphate + UTP + H(+) = UDP-N-acetyl-alpha-D-glucosamine + diphosphate. The protein operates within nucleotide-sugar biosynthesis; UDP-N-acetyl-alpha-D-glucosamine biosynthesis; N-acetyl-alpha-D-glucosamine 1-phosphate from alpha-D-glucosamine 6-phosphate (route II): step 2/2. It participates in nucleotide-sugar biosynthesis; UDP-N-acetyl-alpha-D-glucosamine biosynthesis; UDP-N-acetyl-alpha-D-glucosamine from N-acetyl-alpha-D-glucosamine 1-phosphate: step 1/1. Its pathway is bacterial outer membrane biogenesis; LPS lipid A biosynthesis. Functionally, catalyzes the last two sequential reactions in the de novo biosynthetic pathway for UDP-N-acetylglucosamine (UDP-GlcNAc). The C-terminal domain catalyzes the transfer of acetyl group from acetyl coenzyme A to glucosamine-1-phosphate (GlcN-1-P) to produce N-acetylglucosamine-1-phosphate (GlcNAc-1-P), which is converted into UDP-GlcNAc by the transfer of uridine 5-monophosphate (from uridine 5-triphosphate), a reaction catalyzed by the N-terminal domain. The chain is Bifunctional protein GlmU from Acidiphilium cryptum (strain JF-5).